We begin with the raw amino-acid sequence, 268 residues long: Aliphatic sulfonates import ATP-binding protein SsuB (268 aa).

The ABC transporter domain maps to 15 to 236 (LAVRNLQKTF…VRGSHRLAAL (222 aa)). 47 to 54 (GRSGCGKS) contacts ATP.

The protein belongs to the ABC transporter superfamily. Aliphatic sulfonates importer (TC 3.A.1.17.2) family. The complex is composed of two ATP-binding proteins (SsuB), two transmembrane proteins (SsuC) and a solute-binding protein (SsuA).

It localises to the cell inner membrane. It carries out the reaction ATP + H2O + aliphatic sulfonate-[sulfonate-binding protein]Side 1 = ADP + phosphate + aliphatic sulfonateSide 2 + [sulfonate-binding protein]Side 1.. Its function is as follows. Part of the ABC transporter complex SsuABC involved in aliphatic sulfonates import. Responsible for energy coupling to the transport system. This is Aliphatic sulfonates import ATP-binding protein SsuB from Pseudomonas fluorescens (strain Pf0-1).